The primary structure comprises 329 residues: Ribosomal RNA small subunit methyltransferase H (329 aa).

Residues G44–Y46, D62, D110, and Q117 contribute to the S-adenosyl-L-methionine site. Residues A297–A329 form a disordered region.

The protein belongs to the methyltransferase superfamily. RsmH family.

It is found in the cytoplasm. It catalyses the reaction cytidine(1402) in 16S rRNA + S-adenosyl-L-methionine = N(4)-methylcytidine(1402) in 16S rRNA + S-adenosyl-L-homocysteine + H(+). Its function is as follows. Specifically methylates the N4 position of cytidine in position 1402 (C1402) of 16S rRNA. In Rhodospirillum centenum (strain ATCC 51521 / SW), this protein is Ribosomal RNA small subunit methyltransferase H.